A 178-amino-acid chain; its full sequence is MIGKKVLDEIYEINIAMELIVLGARMQVLESETSVSRRRLVRLYKEIRGCPPPKGMLPFSEDWFMCWEQNIHSSLFYNIYLCLQKTENERPITTLMQAYRLYLEQCYPHSSETPVLGLTRAWTLLRFIGCGMISRKSCMLCAGGFVMVTEFIKEPFTCSLCCPPSRALKKFSATSGSS.

The Zn(2+) site is built by C138, C141, C158, and C161.

It belongs to the FlhC family. In terms of assembly, heterohexamer composed of two FlhC and four FlhD subunits. Each FlhC binds a FlhD dimer, forming a heterotrimer, and a hexamer assembles by dimerization of two heterotrimers. Zn(2+) is required as a cofactor.

It is found in the cytoplasm. Functionally, functions in complex with FlhD as a master transcriptional regulator that regulates transcription of several flagellar and non-flagellar operons by binding to their promoter region. Activates expression of class 2 flagellar genes, including fliA, which is a flagellum-specific sigma factor that turns on the class 3 genes. Also regulates genes whose products function in a variety of physiological pathways. The sequence is that of Flagellar transcriptional regulator FlhC from Erwinia tasmaniensis (strain DSM 17950 / CFBP 7177 / CIP 109463 / NCPPB 4357 / Et1/99).